The sequence spans 327 residues: Flotillin-like protein FloA (327 aa).

A helical membrane pass occupies residues 2–22 (IGLIIIVVIVLVALLLLFSFV). A disordered region spans residues 305–327 (ADTGMRNSINQRTNQKDDESPDK). Residues 318 to 327 (NQKDDESPDK) show a composition bias toward basic and acidic residues.

Belongs to the flotillin-like FloA family. As to quaternary structure, homooligomerizes.

The protein resides in the cell membrane. It localises to the membrane raft. Its function is as follows. Found in functional membrane microdomains (FMM) that may be equivalent to eukaryotic membrane rafts. FMMs are highly dynamic and increase in number as cells age. Flotillins are thought to be important factors in membrane fluidity. This chain is Flotillin-like protein FloA, found in Staphylococcus saprophyticus subsp. saprophyticus (strain ATCC 15305 / DSM 20229 / NCIMB 8711 / NCTC 7292 / S-41).